Consider the following 150-residue polypeptide: MTTSGVPFGMTLRPTRSRLSRRTPYSRDRLPPFETETRATILEDHPLLPECNTLTMHNAWTSPSPPVEQPQVGQQPVAQQLDSDMNLSELPGEFINITDERLARQETVWNITPKNMSVTHDMMLFKASRGERTVYSVCWEGGGRLNTRVL.

Residues 1-31 (MTTSGVPFGMTLRPTRSRLSRRTPYSRDRLP) form a disordered region. Positions 1-58 (MTTSGVPFGMTLRPTRSRLSRRTPYSRDRLPPFETETRATILEDHPLLPECNTLTMHN) match the Nuclear localization signal motif.

This sequence belongs to the adenoviridae E4-orf6/7 family. As to quaternary structure, interacts with host E2F proteins.

The protein localises to the host nucleus. In terms of biological role, modulates viral and host transcriptional activity to promote viral genome replication. Stimulates viral E2a promoter activity by binding and inducing dimerization of host E2F. During viral infection E1A protein binds to cellular retinablastoma (RB) family members and dissociates these repressors from a complex with E2F proteins. Free E2F is then bound to E4orf6/7 which leads to transactivation of viral E2 promoter, and cellular promoters such as E2F-1 promoter. Activation of cellular E2F targets promote cell cycle S phase and thereby possibly favorises viral DNA replication process. This Human adenovirus C serotype 2 (HAdV-2) protein is Early 4 ORF6/7 control protein.